The following is a 335-amino-acid chain: Meiotic expression up-regulated protein 14 (335 aa).

It is found in the cytoplasm. Its subcellular location is the cytoskeleton. The protein localises to the microtubule organizing center. It localises to the spindle pole body. The protein resides in the nucleus membrane. It is found in the prospore membrane. Functionally, has a role in nuclear division during meiosis II where it stabilizes the proper segregation of the spindle pole bodies. Also has a role in the formation and extension of the forespore membrane. The protein is Meiotic expression up-regulated protein 14 (meu14) of Schizosaccharomyces pombe (strain 972 / ATCC 24843) (Fission yeast).